The primary structure comprises 800 residues: Cation/H(+) antiporter 19 (800 aa).

A run of 12 helical transmembrane segments spans residues 30–50 (FALP…RLLA), 60–77 (RVIA…SALG), 92–112 (LTVL…LVGL), 127–147 (LLIA…TSFV), 158–178 (QLPF…PVLA), 196–216 (MSAA…AIAL), 224–244 (LVSV…VVAI), 278–298 (FVTD…GIVA), 315–335 (LVSG…TDVT), 343–363 (WGLL…GTVG), 375–395 (AVTL…VLNI), and 408–428 (AILV…VMLI). The disordered stretch occupies residues 776–800 (ADTRPLVEEDAEYDQSSRDISDLTA). The span at 790-800 (QSSRDISDLTA) shows a compositional bias: basic and acidic residues.

This sequence belongs to the monovalent cation:proton antiporter 2 (CPA2) transporter (TC 2.A.37) family. CHX (TC 2.A.37.4) subfamily. In terms of tissue distribution, expressed in the whole plant but preferentially in pollen.

It localises to the membrane. May operate as a cation/H(+) antiporter. This is Cation/H(+) antiporter 19 (CHX19) from Arabidopsis thaliana (Mouse-ear cress).